Consider the following 136-residue polypeptide: uncharacterized protein (136 aa).

This is an uncharacterized protein from Pseudomonas amygdali pv. tabaci (Pseudomonas syringae pv. tabaci).